The following is a 400-amino-acid chain: Tryptophan 2,3-dioxygenase (400 aa).

Substrate contacts are provided by residues 75-79 (FIIIH) and Arg-146. His-332 contributes to the heme binding site. Thr-346 lines the substrate pocket.

It belongs to the tryptophan 2,3-dioxygenase family. Homotetramer. Dimer of dimers. The cofactor is heme.

The catalysed reaction is L-tryptophan + O2 = N-formyl-L-kynurenine. The protein operates within amino-acid degradation; L-tryptophan degradation via kynurenine pathway; L-kynurenine from L-tryptophan: step 1/2. Heme-dependent dioxygenase that catalyzes the oxidative cleavage of the L-tryptophan (L-Trp) pyrrole ring and converts L-tryptophan to N-formyl-L-kynurenine. Catalyzes the oxidative cleavage of the indole moiety. The chain is Tryptophan 2,3-dioxygenase from Dictyostelium discoideum (Social amoeba).